The primary structure comprises 93 residues: Antitoxin EndoAI (93 aa).

It belongs to the MazE/EndoAI family. Homodimer, forms a heterohexamer composed of alternating toxin and antitoxin homodimers which inhibits the toxin's endoribonuclease activity. Antitoxin prevents RNA binding to the endoribonuclease.

In terms of biological role, antitoxin component of a type II toxin-antitoxin (TA) system. Antitoxin that directly inhibits activity of EndoA in vitro. Upon expression in E.coli counteracts inhibitory effect of endoribonuclease EndoA. The EndoA-EndoAI complex does not seem to bind its own promoter. The protein is Antitoxin EndoAI of Bacillus subtilis (strain 168).